Here is a 311-residue protein sequence, read N- to C-terminus: tRNA dimethylallyltransferase (311 aa).

12–19 (GPTASGKT) is a binding site for ATP. 14-19 (TASGKT) is a substrate binding site. 3 interaction with substrate tRNA regions span residues 37–40 (DSAL), 161–165 (QRINR), and 241–246 (RCVGYR).

It belongs to the IPP transferase family. Monomer. Mg(2+) serves as cofactor.

It catalyses the reaction adenosine(37) in tRNA + dimethylallyl diphosphate = N(6)-dimethylallyladenosine(37) in tRNA + diphosphate. In terms of biological role, catalyzes the transfer of a dimethylallyl group onto the adenine at position 37 in tRNAs that read codons beginning with uridine, leading to the formation of N6-(dimethylallyl)adenosine (i(6)A). This chain is tRNA dimethylallyltransferase, found in Histophilus somni (strain 2336) (Haemophilus somnus).